We begin with the raw amino-acid sequence, 443 residues long: Trigger factor (443 aa).

One can recognise a PPIase FKBP-type domain in the interval 164–249 (GDVLCVDFVG…AKSLKKAVDP (86 aa)).

This sequence belongs to the FKBP-type PPIase family. Tig subfamily.

Its subcellular location is the cytoplasm. The enzyme catalyses [protein]-peptidylproline (omega=180) = [protein]-peptidylproline (omega=0). Its function is as follows. Involved in protein export. Acts as a chaperone by maintaining the newly synthesized protein in an open conformation. Functions as a peptidyl-prolyl cis-trans isomerase. In Gluconobacter oxydans (strain 621H) (Gluconobacter suboxydans), this protein is Trigger factor.